Reading from the N-terminus, the 179-residue chain is Segregation and condensation protein B (179 aa).

It belongs to the ScpB family. As to quaternary structure, homodimer. Homodimerization may be required to stabilize the binding of ScpA to the Smc head domains. Component of a cohesin-like complex composed of ScpA, ScpB and the Smc homodimer, in which ScpA and ScpB bind to the head domain of Smc. The presence of the three proteins is required for the association of the complex with DNA.

The protein resides in the cytoplasm. In terms of biological role, participates in chromosomal partition during cell division. May act via the formation of a condensin-like complex containing Smc and ScpA that pull DNA away from mid-cell into both cell halves. The sequence is that of Segregation and condensation protein B from Streptococcus equi subsp. zooepidemicus (strain H70).